The following is a 147-amino-acid chain: UPF0735 ACT domain-containing protein ABC1543 (147 aa).

The 76-residue stretch at 70–145 (TFSINLADRS…SVERVELVGS (76 aa)) folds into the ACT domain.

Belongs to the UPF0735 family.

The chain is UPF0735 ACT domain-containing protein ABC1543 from Shouchella clausii (strain KSM-K16) (Alkalihalobacillus clausii).